The following is a 277-amino-acid chain: Proteasome subunit beta type-7 (277 aa).

A propeptide spans 1 to 43 (MAAVSVFQPPVGGFSFDNCRRNAVLEADFAKKGFKLPKARKTG) (removed in mature form). Thr-44 acts as the Nucleophile in catalysis.

Belongs to the peptidase T1B family. As to quaternary structure, the 26S proteasome consists of a 20S proteasome core and two 19S regulatory subunits. The 20S proteasome core is a barrel-shaped complex made of 28 subunits that are arranged in four stacked rings. The two outer rings are each formed by seven alpha subunits, and the two inner rings are formed by seven beta subunits. The proteolytic activity is exerted by three beta-subunits PSMB5, PSMB6 and PSMB7.

The protein localises to the cytoplasm. The protein resides in the nucleus. The catalysed reaction is Cleavage of peptide bonds with very broad specificity.. Its function is as follows. Component of the 20S core proteasome complex involved in the proteolytic degradation of most intracellular proteins. This complex plays numerous essential roles within the cell by associating with different regulatory particles. Associated with two 19S regulatory particles, forms the 26S proteasome and thus participates in the ATP-dependent degradation of ubiquitinated proteins. The 26S proteasome plays a key role in the maintenance of protein homeostasis by removing misfolded or damaged proteins that could impair cellular functions, and by removing proteins whose functions are no longer required. Associated with the PA200 or PA28, the 20S proteasome mediates ubiquitin-independent protein degradation. This type of proteolysis is required in several pathways including spermatogenesis (20S-PA200 complex) or generation of a subset of MHC class I-presented antigenic peptides (20S-PA28 complex). Within the 20S core complex, PSMB7 displays a trypsin-like activity. In Mus musculus (Mouse), this protein is Proteasome subunit beta type-7 (Psmb7).